We begin with the raw amino-acid sequence, 126 residues long: 13 kDa ribonucleoprotein-associated protein (126 aa).

Belongs to the eukaryotic ribosomal protein eL8 family. As to quaternary structure, binds to the C'/D and B/C motifs in U3 snoRNA. Component of the U4/U6-U5 tri-snRNP complex composed of the U4, U6 and U5 snRNAs and at least PRP3, PRP4, PRP6, PRP8, PRP18, PRP31, PRP38, SNU13, SNU23, SNU66, SNU114, SPP381, SMB1, SMD1, SMD2, SMD3, SMX2, SMX3, LSM2, LSM3, LSM4, LSM5, LSM6, LSM7, LSM8, BRR2 and DIB1. Binds to the 5'-stem-loop of U4 snRNA. Component of the ribosomal small subunit (SSU) processome composed of at least 40 protein subunits and snoRNA U3.

Its subcellular location is the nucleus. The protein resides in the nucleolus. Functionally, common component of the spliceosome and rRNA processing machinery. In association with the spliceosomal U4/U6.U5 tri-snRNP particle, required for splicing of pre-mRNA. In association with box C/D snoRNPs, required for processing of pre-ribosomal RNA (rRNA) and site-specific 2'-O-methylation of substrate RNAs. Essential for the accumulation and stability of U4 snRNA, U6 snRNA, and box C/D snoRNAs. This Saccharomyces cerevisiae (strain ATCC 204508 / S288c) (Baker's yeast) protein is 13 kDa ribonucleoprotein-associated protein (SNU13).